The primary structure comprises 158 residues: Endoribonuclease YbeY (158 aa).

3 residues coordinate Zn(2+): H118, H122, and H128.

The protein belongs to the endoribonuclease YbeY family. It depends on Zn(2+) as a cofactor.

It localises to the cytoplasm. Functionally, single strand-specific metallo-endoribonuclease involved in late-stage 70S ribosome quality control and in maturation of the 3' terminus of the 16S rRNA. This is Endoribonuclease YbeY from Bartonella bacilliformis (strain ATCC 35685 / KC583 / Herrer 020/F12,63).